The primary structure comprises 246 residues: Ribonuclease 3 (246 aa).

In terms of domain architecture, RNase III spans 18-147 (FQELQNKIGI…FIGALYLDQG (130 aa)). Position 60 (glutamate 60) interacts with Mg(2+). Aspartate 64 is an active-site residue. 2 residues coordinate Mg(2+): aspartate 133 and glutamate 136. Residue glutamate 136 is part of the active site. Residues 173-242 (DFKSQLQELV…AQMALETLRA (70 aa)) enclose the DRBM domain.

Belongs to the ribonuclease III family. In terms of assembly, homodimer. Mg(2+) is required as a cofactor.

Its subcellular location is the cytoplasm. The catalysed reaction is Endonucleolytic cleavage to 5'-phosphomonoester.. In terms of biological role, digests double-stranded RNA. Involved in the processing of primary rRNA transcript to yield the immediate precursors to the large and small rRNAs (23S and 16S). Processes some mRNAs, and tRNAs when they are encoded in the rRNA operon. Processes pre-crRNA and tracrRNA of type II CRISPR loci if present in the organism. The protein is Ribonuclease 3 of Geobacillus kaustophilus (strain HTA426).